A 417-amino-acid polypeptide reads, in one-letter code: Serine hydroxymethyltransferase (417 aa).

Residues Leu-121 and 125–127 each bind (6S)-5,6,7,8-tetrahydrofolate; that span reads GHL. Residue Lys-229 is modified to N6-(pyridoxal phosphate)lysine. 355–357 is a binding site for (6S)-5,6,7,8-tetrahydrofolate; that stretch reads SPF.

The protein belongs to the SHMT family. As to quaternary structure, homodimer. Requires pyridoxal 5'-phosphate as cofactor.

It localises to the cytoplasm. It catalyses the reaction (6R)-5,10-methylene-5,6,7,8-tetrahydrofolate + glycine + H2O = (6S)-5,6,7,8-tetrahydrofolate + L-serine. It functions in the pathway one-carbon metabolism; tetrahydrofolate interconversion. Its pathway is amino-acid biosynthesis; glycine biosynthesis; glycine from L-serine: step 1/1. Catalyzes the reversible interconversion of serine and glycine with tetrahydrofolate (THF) serving as the one-carbon carrier. This reaction serves as the major source of one-carbon groups required for the biosynthesis of purines, thymidylate, methionine, and other important biomolecules. Also exhibits THF-independent aldolase activity toward beta-hydroxyamino acids, producing glycine and aldehydes, via a retro-aldol mechanism. This chain is Serine hydroxymethyltransferase, found in Yersinia pestis bv. Antiqua (strain Antiqua).